The chain runs to 290 residues: Glycine--tRNA ligase alpha subunit (290 aa).

It belongs to the class-II aminoacyl-tRNA synthetase family. Tetramer of two alpha and two beta subunits.

It localises to the cytoplasm. It catalyses the reaction tRNA(Gly) + glycine + ATP = glycyl-tRNA(Gly) + AMP + diphosphate. The sequence is that of Glycine--tRNA ligase alpha subunit from Gloeobacter violaceus (strain ATCC 29082 / PCC 7421).